The chain runs to 645 residues: Zinc finger protein 235 (645 aa).

The 79-residue stretch at 8–86 (VTFRDVAVVF…TSHDVNKLAR (79 aa)) folds into the KRAB domain. Disordered regions lie at residues 112–144 (GAEQPSQAPEDDGCLENLPSNHSSSSDNQEFLS) and 255–280 (KKSPVHSTHKDTRHSPSVPIQPSVHP). Residues 129 to 144 (LPSNHSSSSDNQEFLS) are compositionally biased toward polar residues. C2H2-type zinc fingers lie at residues 285–307 (YWCHECGKGFRQSSALQTHQRVH), 313–335 (YRCDSCGKGFSRSSDLNIHRRVH), 341–363 (YKCEVCGKGFTQWAHLQAHERIH), 369–391 (YKCGDCGKRFSCSSNLHTHQRVH), 397–419 (YECNECGKRFSLSGNLDIHQRVH), 425–447 (YKCEECGKGFSSASSFQSHQRVH), 453–475 (FHCSVCGKNFSRSSHFLDHQRIH), 481–503 (YRCEVCGKRFPWSLSLHSHQSVH), 509–531 (YKCGECGKGFSHASSLQAHHSVH), 537–559 (FKCNVCQKQFSKTSNLQAHQRVH), 565–587 (YKCDTCGKAFSQKSSLQVHQRIH), 593–615 (FKCEECGKEFRWSVGLSSHQRVH), and 621–643 (YTCQQCGKGFSQASYFHMHQRVH).

The protein belongs to the krueppel C2H2-type zinc-finger protein family.

It is found in the nucleus. In terms of biological role, may be involved in transcriptional regulation. The chain is Zinc finger protein 235 (Znf235) from Mus musculus (Mouse).